A 338-amino-acid chain; its full sequence is Holliday junction branch migration complex subunit RuvB (338 aa).

The segment covering 1–14 has biased composition (basic and acidic residues); it reads MENDHGILSDHPSG. The disordered stretch occupies residues 1–21; the sequence is MENDHGILSDHPSGEEESQVE. Positions 3 to 185 are large ATPase domain (RuvB-L); sequence NDHGILSDHP…FGIVEHMNYY (183 aa). ATP is bound by residues Leu24, Arg25, Gly66, Lys69, Thr70, Thr71, 132-134, Arg175, Tyr185, and Arg222; that span reads EDY. Mg(2+) is bound at residue Thr70. Residues 186–256 are small ATPAse domain (RuvB-S); it reads TQDELTKIIF…IVKQALSLLQ (71 aa). Positions 259 to 338 are head domain (RuvB-H); it reads DRGLDEIDRK…LGIEYPTDKN (80 aa). Positions 314 and 319 each coordinate DNA.

This sequence belongs to the RuvB family. As to quaternary structure, homohexamer. Forms an RuvA(8)-RuvB(12)-Holliday junction (HJ) complex. HJ DNA is sandwiched between 2 RuvA tetramers; dsDNA enters through RuvA and exits via RuvB. An RuvB hexamer assembles on each DNA strand where it exits the tetramer. Each RuvB hexamer is contacted by two RuvA subunits (via domain III) on 2 adjacent RuvB subunits; this complex drives branch migration. In the full resolvosome a probable DNA-RuvA(4)-RuvB(12)-RuvC(2) complex forms which resolves the HJ.

The protein localises to the cytoplasm. It catalyses the reaction ATP + H2O = ADP + phosphate + H(+). Functionally, the RuvA-RuvB-RuvC complex processes Holliday junction (HJ) DNA during genetic recombination and DNA repair, while the RuvA-RuvB complex plays an important role in the rescue of blocked DNA replication forks via replication fork reversal (RFR). RuvA specifically binds to HJ cruciform DNA, conferring on it an open structure. The RuvB hexamer acts as an ATP-dependent pump, pulling dsDNA into and through the RuvAB complex. RuvB forms 2 homohexamers on either side of HJ DNA bound by 1 or 2 RuvA tetramers; 4 subunits per hexamer contact DNA at a time. Coordinated motions by a converter formed by DNA-disengaged RuvB subunits stimulates ATP hydrolysis and nucleotide exchange. Immobilization of the converter enables RuvB to convert the ATP-contained energy into a lever motion, pulling 2 nucleotides of DNA out of the RuvA tetramer per ATP hydrolyzed, thus driving DNA branch migration. The RuvB motors rotate together with the DNA substrate, which together with the progressing nucleotide cycle form the mechanistic basis for DNA recombination by continuous HJ branch migration. Branch migration allows RuvC to scan DNA until it finds its consensus sequence, where it cleaves and resolves cruciform DNA. In Limosilactobacillus reuteri (strain DSM 20016) (Lactobacillus reuteri), this protein is Holliday junction branch migration complex subunit RuvB.